The primary structure comprises 613 residues: MSSATVSRKSLDEARNQRNRSFFLRDIIVIRLINAWWIATFFQPDEFFQSLEPAWNLAFGSQSGAWLTWEWQHQLRTSLHPALFAGVYLVADFISSHILPVGILRATILVAVPQALQAVIAGLGDWYTWQLAVSIYGANSNVSFFALFLQIFNPWQWYCSTRTFSNSLEMTLTVMAMYYWPWELLGVAQTTKENPKPAPILKSLWSLRASLCLAALAVVLRPTNILIWATIVLFTITRISLQGPSPLTLSTVVTLIREAIWCGSLILAISAASDRWYFGFWTFPAYNFLYFNLSKSLAVFYGRSPWHYYFLQGLPLICTTSLPFAVASLYKPTAHATSTQQFNVLKTLAYTVFTTVGALSLITHKEVRFIYPLLPALSILAAPYTASFFTSQPSPTTNNPRPQPQIRNKRYLFVALGVNMFLAGYLSFFHQPAPLNVLAYLRHEYERIHPDSVQLAQTSHFSAMPENEDELFALFLMPCHSTPWRSHLIYPGLRAYALGCEPPLHTEPNTPERDNYRDEADRFYDDPIPFLTSELFSPTKALTVPRYIVGFESIEPWLQEFVQTFEAQSLGLTQVRPVWKGFNGLFNEDWRRSGDMIVWDTGVYDNAPPTKEL.

A glycan (N-linked (GlcNAc...) asparagine) is linked at N19. 12 helical membrane-spanning segments follow: residues 22 to 42 (FFLR…ATFF), 83 to 103 (LFAG…PVGI), 106 to 126 (ATIL…LGDW), 132 to 152 (AVSI…LQIF), 168 to 188 (LEMT…LGVA), 216 to 236 (LAVV…LFTI), 252 to 272 (VVTL…ISAA), 280 to 300 (FWTF…LAVF), 309 to 329 (YFLQ…VASL), 342 to 362 (FNVL…LSLI), 369 to 389 (FIYP…ASFF), and 411 to 431 (YLFV…FFHQ).

Belongs to the glycosyltransferase 22 family. PIGB subfamily.

The protein resides in the endoplasmic reticulum membrane. It functions in the pathway glycolipid biosynthesis; glycosylphosphatidylinositol-anchor biosynthesis. Its function is as follows. Mannosyltransferase involved in glycosylphosphatidylinositol-anchor biosynthesis. Transfers the third mannose to Man2-GlcN-acyl-PI during GPI precursor assembly. The chain is GPI mannosyltransferase 3 (GPI10) from Gibberella zeae (strain ATCC MYA-4620 / CBS 123657 / FGSC 9075 / NRRL 31084 / PH-1) (Wheat head blight fungus).